A 294-amino-acid polypeptide reads, in one-letter code: Cutinase (294 aa).

A signal peptide spans 1–33; sequence MLRARPSHRLASAAAVVAATGAALLAGSSPAAA. A disulfide bridge connects residues Cys36 and Cys107. The active-site Nucleophile is Ser118. A disulfide bond links Cys180 and Cys187. Asp184 is an active-site residue. The active-site Proton donor/acceptor is the His198. The interval 222–241 is disordered; it reads GTPTTPTPTPTPTPVPTTCV. The segment covering 226–236 has biased composition (pro residues); sequence TPTPTPTPTPV. The interval 240–294 is may be involved in substrate binding; sequence CVRDSTRDHVAADRAVSLYGRAYARGSRDSLGATSSYNVVSLQQVEGGWRLVTAC.

The protein belongs to the cutinase family.

The protein localises to the secreted. It carries out the reaction cutin + H2O = cutin monomers.. The catalysed reaction is a tetradecanoate ester + H2O = an aliphatic alcohol + tetradecanoate + H(+). It catalyses the reaction hexadecanoate ester + H2O = an aliphatic alcohol + hexadecanoate + H(+). The enzyme catalyses a butanoate ester + H2O = an aliphatic alcohol + butanoate + H(+). It carries out the reaction an octanoate ester + H2O = an aliphatic alcohol + octanoate + H(+). Functionally, catalyzes the hydrolysis of cutin, a polyester that forms the structure of plant cuticle. Shows esterase activity towards p-nitrophenol-linked aliphatic esters (pNP-aliphatic esters). Can depolymerize synthetic polyesters such as poly(epsilon-caprolactone) (PCL) and poly(1,3-propylene adipate) (PPA). Exhibits some activity on poly(lactic acid) (PLA). Can bind but not hydrolyze poly(hydroxybutyrate) (PHB). The sequence is that of Cutinase from Kineococcus radiotolerans (strain ATCC BAA-149 / DSM 14245 / SRS30216).